We begin with the raw amino-acid sequence, 306 residues long: Pantothenate kinase (306 aa).

91–98 (GSVAVGKS) contacts ATP.

The protein belongs to the prokaryotic pantothenate kinase family.

The protein resides in the cytoplasm. It catalyses the reaction (R)-pantothenate + ATP = (R)-4'-phosphopantothenate + ADP + H(+). Its pathway is cofactor biosynthesis; coenzyme A biosynthesis; CoA from (R)-pantothenate: step 1/5. The chain is Pantothenate kinase from Streptococcus pneumoniae serotype 19F (strain G54).